We begin with the raw amino-acid sequence, 279 residues long: Oxygen-dependent coproporphyrinogen-III oxidase (279 aa).

Serine 102 contributes to the substrate binding site. Residues histidine 106 and histidine 116 each coordinate a divalent metal cation. The active-site Proton donor is histidine 116. Residue 118–120 (NTR) coordinates substrate. A divalent metal cation-binding residues include histidine 149 and histidine 179. The important for dimerization stretch occupies residues 244–279 (YVEFNLLYDRGTKFGLMTDGNVEAILMSLPPEVKFN).

It belongs to the aerobic coproporphyrinogen-III oxidase family. As to quaternary structure, homodimer. A divalent metal cation serves as cofactor.

The protein resides in the cytoplasm. The enzyme catalyses coproporphyrinogen III + O2 + 2 H(+) = protoporphyrinogen IX + 2 CO2 + 2 H2O. Its pathway is porphyrin-containing compound metabolism; protoporphyrin-IX biosynthesis; protoporphyrinogen-IX from coproporphyrinogen-III (O2 route): step 1/1. Functionally, involved in the heme biosynthesis. Catalyzes the aerobic oxidative decarboxylation of propionate groups of rings A and B of coproporphyrinogen-III to yield the vinyl groups in protoporphyrinogen-IX. This is Oxygen-dependent coproporphyrinogen-III oxidase from Rickettsia felis (strain ATCC VR-1525 / URRWXCal2) (Rickettsia azadi).